We begin with the raw amino-acid sequence, 629 residues long: Dihydroxy-acid dehydratase 2 (629 aa).

Asp-82 provides a ligand contact to Mg(2+). Cys-123 contacts [2Fe-2S] cluster. The Mg(2+) site is built by Asp-124 and Lys-125. Lys-125 carries the N6-carboxylysine modification. [2Fe-2S] cluster is bound at residue Cys-197. Glu-493 is a Mg(2+) binding site. Catalysis depends on Ser-519, which acts as the Proton acceptor. The interval 603 to 629 (DKGGVRRLPPDELGGPEAAFDTQTRAG) is disordered.

The protein belongs to the IlvD/Edd family. Homodimer. The cofactor is [2Fe-2S] cluster. Mg(2+) serves as cofactor.

The enzyme catalyses (2R)-2,3-dihydroxy-3-methylbutanoate = 3-methyl-2-oxobutanoate + H2O. The catalysed reaction is (2R,3R)-2,3-dihydroxy-3-methylpentanoate = (S)-3-methyl-2-oxopentanoate + H2O. Its pathway is amino-acid biosynthesis; L-isoleucine biosynthesis; L-isoleucine from 2-oxobutanoate: step 3/4. It functions in the pathway amino-acid biosynthesis; L-valine biosynthesis; L-valine from pyruvate: step 3/4. Functionally, functions in the biosynthesis of branched-chain amino acids. Catalyzes the dehydration of (2R,3R)-2,3-dihydroxy-3-methylpentanoate (2,3-dihydroxy-3-methylvalerate) into 2-oxo-3-methylpentanoate (2-oxo-3-methylvalerate) and of (2R)-2,3-dihydroxy-3-methylbutanoate (2,3-dihydroxyisovalerate) into 2-oxo-3-methylbutanoate (2-oxoisovalerate), the penultimate precursor to L-isoleucine and L-valine, respectively. This Nocardia farcinica (strain IFM 10152) protein is Dihydroxy-acid dehydratase 2.